The chain runs to 134 residues: uncharacterized protein (134 aa).

Residues 1-16 (MAKAVALLLAAIAASA) form the signal peptide.

This is an uncharacterized protein from Oryza sativa subsp. indica (Rice).